The following is a 210-amino-acid chain: FMN-dependent NADH:quinone oxidoreductase (210 aa).

FMN-binding positions include 17 to 19 (SRS), 102 to 105 (MWNL), and 148 to 151 (SCGG).

It belongs to the azoreductase type 1 family. Homodimer. It depends on FMN as a cofactor.

It carries out the reaction 2 a quinone + NADH + H(+) = 2 a 1,4-benzosemiquinone + NAD(+). It catalyses the reaction N,N-dimethyl-1,4-phenylenediamine + anthranilate + 2 NAD(+) = 2-(4-dimethylaminophenyl)diazenylbenzoate + 2 NADH + 2 H(+). Quinone reductase that provides resistance to thiol-specific stress caused by electrophilic quinones. In terms of biological role, also exhibits azoreductase activity. Catalyzes the reductive cleavage of the azo bond in aromatic azo compounds to the corresponding amines. The chain is FMN-dependent NADH:quinone oxidoreductase from Trichlorobacter lovleyi (strain ATCC BAA-1151 / DSM 17278 / SZ) (Geobacter lovleyi).